Consider the following 500-residue polypeptide: NAD(P)H-quinone oxidoreductase chain 4, chloroplastic (500 aa).

14 consecutive transmembrane segments (helical) span residues 4–24, 37–57, 87–107, 113–130, 134–154, 167–187, 211–231, 242–262, 272–292, 313–333, 334–354, 386–406, 417–437, and 462–482; these read FPWL…IFFL, MSIC…HFQL, LGSI…AWPV, LFYF…GLFS, LLLF…LLSM, FILY…GMGL, ILFY…IPLH, HYST…YGLI, AHYL…IYAA, MGFI…GAIL, QILS…TACD, LALP…GLIT, LITF…LSML, and LFLL…PDFV.

Belongs to the complex I subunit 4 family.

It localises to the plastid. The protein resides in the chloroplast thylakoid membrane. It carries out the reaction a plastoquinone + NADH + (n+1) H(+)(in) = a plastoquinol + NAD(+) + n H(+)(out). It catalyses the reaction a plastoquinone + NADPH + (n+1) H(+)(in) = a plastoquinol + NADP(+) + n H(+)(out). This Oryza nivara (Indian wild rice) protein is NAD(P)H-quinone oxidoreductase chain 4, chloroplastic.